The primary structure comprises 268 residues: Fatty acid elongase sre1 (268 aa).

Transmembrane regions (helical) follow at residues 31-51 (VFPF…QAIM), 62-82 (FSII…SGVM), 110-130 (IGFW…DTVI), 137-157 (PIIF…WQWL), 161-181 (WLVG…LMYY), 198-218 (ITKA…YWFV), and 227-247 (APLS…ILFG).

It belongs to the ELO family.

It is found in the membrane. The catalysed reaction is a very-long-chain acyl-CoA + malonyl-CoA + H(+) = a very-long-chain 3-oxoacyl-CoA + CO2 + CoA. In terms of biological role, could be implicated in synthesis of very long chain fatty acids. This is Fatty acid elongase sre1 (sre1) from Dictyostelium discoideum (Social amoeba).